Consider the following 620-residue polypeptide: Protein CNGC15b (620 aa).

Helical transmembrane passes span 73–93 (IFLV…YLPI), 102–122 (IGIA…VFYV), 161–181 (GFFL…WIVI), 198–218 (FIII…SSQI), 237–257 (LMLY…LSIE), and 356–376 (GEIM…ALLI). Residue 462-559 (LFDAMDERML…SSTRTVKAIS (98 aa)) coordinates a nucleoside 3',5'-cyclic phosphate.

This sequence belongs to the cyclic nucleotide-gated cation channel (TC 1.A.1.5) family. In terms of assembly, interacts (via N-terminus) with DMI1 (via c-terminus). The Nod factor has no effect on this interaction, implying that the complex is maintained after activation. Expressed in roots, stems, leaves, flowers and pods.

It is found in the nucleus membrane. Its function is as follows. Cyclic nucleotide-gated channel involved in the establishment of both rhizobial and mycorrhizal associations. Required for full activation of nuclear-localized Ca(2+) oscillations by Nod and Myc factors. Simultaneous activation of the K(+)-permeable channel DMI1 and the Ca(2+) channel CNGC15 can give rise to sustained Ca(2+) oscillations. May function during fertilization in both female and male gametophytic Ca(2+) signaling. This is Protein CNGC15b from Medicago truncatula (Barrel medic).